The sequence spans 205 residues: Putative 3-methyladenine DNA glycosylase (205 aa).

The protein belongs to the DNA glycosylase MPG family.

This is Putative 3-methyladenine DNA glycosylase from Bacillus cereus (strain G9842).